Here is a 157-residue protein sequence, read N- to C-terminus: SsrA-binding protein (157 aa).

It belongs to the SmpB family.

The protein resides in the cytoplasm. Required for rescue of stalled ribosomes mediated by trans-translation. Binds to transfer-messenger RNA (tmRNA), required for stable association of tmRNA with ribosomes. tmRNA and SmpB together mimic tRNA shape, replacing the anticodon stem-loop with SmpB. tmRNA is encoded by the ssrA gene; the 2 termini fold to resemble tRNA(Ala) and it encodes a 'tag peptide', a short internal open reading frame. During trans-translation Ala-aminoacylated tmRNA acts like a tRNA, entering the A-site of stalled ribosomes, displacing the stalled mRNA. The ribosome then switches to translate the ORF on the tmRNA; the nascent peptide is terminated with the 'tag peptide' encoded by the tmRNA and targeted for degradation. The ribosome is freed to recommence translation, which seems to be the essential function of trans-translation. In Elusimicrobium minutum (strain Pei191), this protein is SsrA-binding protein.